A 92-amino-acid chain; its full sequence is Large ribosomal subunit protein eL43z (92 aa).

A C4-type zinc finger spans residues 39-60 (CEFCGKFAVKRKAVGIWGCKDC).

It belongs to the eukaryotic ribosomal protein eL43 family.

The chain is Large ribosomal subunit protein eL43z from Oryza sativa subsp. japonica (Rice).